The sequence spans 429 residues: Histidine--tRNA ligase (429 aa).

It belongs to the class-II aminoacyl-tRNA synthetase family. As to quaternary structure, homodimer.

The protein localises to the cytoplasm. The catalysed reaction is tRNA(His) + L-histidine + ATP = L-histidyl-tRNA(His) + AMP + diphosphate + H(+). In Acidovorax ebreus (strain TPSY) (Diaphorobacter sp. (strain TPSY)), this protein is Histidine--tRNA ligase.